The primary structure comprises 989 residues: Phosphoenolpyruvate carboxylase (989 aa).

Catalysis depends on residues H175 and K630.

The protein belongs to the PEPCase type 1 family. The cofactor is Mg(2+).

The catalysed reaction is oxaloacetate + phosphate = phosphoenolpyruvate + hydrogencarbonate. Functionally, forms oxaloacetate, a four-carbon dicarboxylic acid source for the tricarboxylic acid cycle. In Prochlorococcus marinus (strain MIT 9312), this protein is Phosphoenolpyruvate carboxylase.